Here is a 938-residue protein sequence, read N- to C-terminus: MLEADAARLKTDRLGYNPLHVLRADAATRRQEPAILTMIRSSPPMSVDSSPLPEALRHAASISRFMRRMLDSRPWLAAQLAGSLGQPLDSEAMSSFLANRGVDEARLRASLRHLRSWVVCHVLTRDLNGFADLAEVTETMTVLAEVTVRATYEVLREGLVARYGAPLSPTGWEQELLVIGMGKLGGRELNVSSDIDLIFVYPEDGDTGGNKVISNFEFFERLGKQMIQALADVTEHGQVFRVDMRLRPNGDSGPLVCSFDMLENYFITQGREWERYAWIKARVLAGERYHELEQIARPFVFRKYLDFGSINAMRALHAQIRREVTRRDRVNNIKLGPGGIREIEFTAQVFQLIRGGREPGLQVRATLDVLAVLGERGILTPQTVGELAEAYDFLRRLEHRLQYLDDAQTHDLPGNDEDCECIARAMDFPDYTSFLGVLDHHRAAVSRHFDHVFGDPSEEAHTLDSMWAAARDVEQAEPILSRLGYGDPSGAAHRLAALHGSARYQQLPNHIRSRLDALMPRVVEVAAATPGPDETLARCIDLIEAISRRGAYLALLQQYPQALRRVADLVGASRWAAQYLTRHPILLDELLDDRNLEPAPDWDALRAQMRDTLDTLEPDMERQMDVMREQHHAQVFRLLTQDIAGLLTVEKLADHLSALADLMLELALPLVWRKIKIRHRDDPAFAVIAYGKLGGKELGYASDLDIVFLFDDPAPEALEVYTRLAQRINTWLSSQTAAGILFETDLRLRPNGESGLLVTSIESFRKYQLESAWVWEHQALTRARFAAGDATIGAAFERIRCEVLRLPRDIAALRAEVLAMRRKMSDAHAGKSERFNLKHDAGGLVDVEFLIQYLVLGHAHRYPELTGNLGNIALLRIAGELGLIPAELAARCGDSYRLFRRLQHRQRLNGLLSLVAPDEVAAAREPVRALWTIVFGSA.

Positions 1–457 are adenylyl removase; the sequence is MLEADAARLK…HFDHVFGDPS (457 aa). The adenylyl transferase stretch occupies residues 460 to 938; the sequence is AHTLDSMWAA…ALWTIVFGSA (479 aa).

Belongs to the GlnE family. Requires Mg(2+) as cofactor.

It catalyses the reaction [glutamine synthetase]-O(4)-(5'-adenylyl)-L-tyrosine + phosphate = [glutamine synthetase]-L-tyrosine + ADP. The catalysed reaction is [glutamine synthetase]-L-tyrosine + ATP = [glutamine synthetase]-O(4)-(5'-adenylyl)-L-tyrosine + diphosphate. Involved in the regulation of glutamine synthetase GlnA, a key enzyme in the process to assimilate ammonia. When cellular nitrogen levels are high, the C-terminal adenylyl transferase (AT) inactivates GlnA by covalent transfer of an adenylyl group from ATP to specific tyrosine residue of GlnA, thus reducing its activity. Conversely, when nitrogen levels are low, the N-terminal adenylyl removase (AR) activates GlnA by removing the adenylyl group by phosphorolysis, increasing its activity. The regulatory region of GlnE binds the signal transduction protein PII (GlnB) which indicates the nitrogen status of the cell. The chain is Bifunctional glutamine synthetase adenylyltransferase/adenylyl-removing enzyme from Aromatoleum aromaticum (strain DSM 19018 / LMG 30748 / EbN1) (Azoarcus sp. (strain EbN1)).